Consider the following 81-residue polypeptide: Photosystem I iron-sulfur center (81 aa).

4Fe-4S ferredoxin-type domains follow at residues 2 to 31 (SHTVKIYDTCIGCTQCVRACPTDVLEMVPW) and 37 to 68 (GQIASSPRVEDCVGCKRCETACPTDFLSVRVY). Residues Cys-11, Cys-14, Cys-17, Cys-21, Cys-48, Cys-51, Cys-54, and Cys-58 each contribute to the [4Fe-4S] cluster site.

In terms of assembly, the eukaryotic PSI reaction center is composed of at least 11 subunits. [4Fe-4S] cluster serves as cofactor.

The protein resides in the plastid. Its subcellular location is the chloroplast thylakoid membrane. It catalyses the reaction reduced [plastocyanin] + hnu + oxidized [2Fe-2S]-[ferredoxin] = oxidized [plastocyanin] + reduced [2Fe-2S]-[ferredoxin]. In terms of biological role, apoprotein for the two 4Fe-4S centers FA and FB of photosystem I (PSI); essential for photochemical activity. FB is the terminal electron acceptor of PSI, donating electrons to ferredoxin. The C-terminus interacts with PsaA/B/D and helps assemble the protein into the PSI complex. Required for binding of PsaD and PsaE to PSI. PSI is a plastocyanin/cytochrome c6-ferredoxin oxidoreductase, converting photonic excitation into a charge separation, which transfers an electron from the donor P700 chlorophyll pair to the spectroscopically characterized acceptors A0, A1, FX, FA and FB in turn. This Phaeodactylum tricornutum (strain CCAP 1055/1) protein is Photosystem I iron-sulfur center.